A 697-amino-acid polypeptide reads, in one-letter code: Putative flagellar export/assembly protein LfhA (697 aa).

Helical transmembrane passes span 19-39 (VPLV…PALL), 40-60 (DILF…AVSA), 66-86 (FSLF…LNVA), 116-136 (GNFV…FIVV), 204-224 (AIAG…IGIF), 242-262 (IGDG…AAII), and 280-302 (LLAS…VVPG).

The protein belongs to the FHIPEP (flagella/HR/invasion proteins export pore) family.

The protein localises to the cell inner membrane. Part of the flagellar gene cluster Flag-2. However, the Flag-2 flagellar system could be inactive in strain 042 due to a frameshift in lfgC. This chain is Putative flagellar export/assembly protein LfhA, found in Escherichia coli O44:H18 (strain 042 / EAEC).